We begin with the raw amino-acid sequence, 440 residues long: Chromosome partition protein MukF (440 aa).

The interval 208–236 is leucine-zipper; that stretch reads LSETSGTLRELQDTLEAAGDKLQANLLRI.

This sequence belongs to the MukF family. Interacts, and probably forms a ternary complex, with MukE and MukB via its C-terminal region. The complex formation is stimulated by calcium or magnesium. It is required for an interaction between MukE and MukB.

It localises to the cytoplasm. Its subcellular location is the nucleoid. Its function is as follows. Involved in chromosome condensation, segregation and cell cycle progression. May participate in facilitating chromosome segregation by condensation DNA from both sides of a centrally located replisome during cell division. Not required for mini-F plasmid partitioning. Probably acts via its interaction with MukB and MukE. Overexpression results in anucleate cells. It has a calcium binding activity. The protein is Chromosome partition protein MukF of Salmonella agona (strain SL483).